Consider the following 372-residue polypeptide: tRNA-specific 2-thiouridylase MnmA 1 (372 aa).

ATP-binding positions include 26–33 (AISGGVDS) and M52. Catalysis depends on C118, which acts as the Nucleophile. C118 and C214 are disulfide-bonded. G142 contacts ATP. The interaction with tRNA stretch occupies residues 164 to 166 (KDQ). Catalysis depends on C214, which acts as the Cysteine persulfide intermediate.

It belongs to the MnmA/TRMU family.

It localises to the cytoplasm. It catalyses the reaction S-sulfanyl-L-cysteinyl-[protein] + uridine(34) in tRNA + AH2 + ATP = 2-thiouridine(34) in tRNA + L-cysteinyl-[protein] + A + AMP + diphosphate + H(+). Functionally, catalyzes the 2-thiolation of uridine at the wobble position (U34) of tRNA, leading to the formation of s(2)U34. The protein is tRNA-specific 2-thiouridylase MnmA 1 of Syntrophus aciditrophicus (strain SB).